The following is an 817-amino-acid chain: Protein EFR3 homolog B (817 aa).

Phosphoserine occurs at positions 212, 214, and 216.

Belongs to the EFR3 family. Component of a phosphatidylinositol 4-kinase (PI4K) complex, composed of PI4KA, EFR3 (EFR3A or EFR3B), TTC7 (TTC7A or TTC7B) and HYCC (HYCC1 or HYCC2). In terms of processing, palmitoylated at its N-terminus, anchoring the protein to the plasma membrane. Widely expressed.

Its subcellular location is the cell membrane. The protein localises to the cytoplasm. It is found in the cytosol. Its function is as follows. Component of a complex required to localize phosphatidylinositol 4-kinase (PI4K) to the plasma membrane. The complex acts as a regulator of phosphatidylinositol 4-phosphate (PtdIns(4)P) synthesis. In the complex, EFR3B probably acts as the membrane-anchoring component. Also involved in responsiveness to G-protein-coupled receptors; it is however unclear whether this role is direct or indirect. This is Protein EFR3 homolog B (Efr3b) from Mus musculus (Mouse).